Here is a 235-residue protein sequence, read N- to C-terminus: Lipoprotein signal peptidase (235 aa).

The tract at residues 1–23 (MTDETSGPAEPVTDAPGDAESPA) is disordered. A run of 3 helical transmembrane segments spans residues 31–51 (LLLTVAAVVLFLDVVTKVLAV), 84–104 (GYTWVLTLVATGVVIGIIWMG), and 108–128 (VSPWWALGLGLILGGATGNLV). Catalysis depends on residues Asp144 and Asp158. The helical transmembrane segment at 156-176 (VADPSVVGGAILLVALSLFGF) threads the bilayer. The tract at residues 185–235 (RPGEDAEPSAGASDSTPEAPAADGPDKPAGPVGPEDAAEESKTVGHQAEPS) is disordered. The segment covering 201–218 (PEAPAADGPDKPAGPVGP) has biased composition (low complexity).

Belongs to the peptidase A8 family.

The protein resides in the cell membrane. It catalyses the reaction Release of signal peptides from bacterial membrane prolipoproteins. Hydrolyzes -Xaa-Yaa-Zaa-|-(S,diacylglyceryl)Cys-, in which Xaa is hydrophobic (preferably Leu), and Yaa (Ala or Ser) and Zaa (Gly or Ala) have small, neutral side chains.. The protein operates within protein modification; lipoprotein biosynthesis (signal peptide cleavage). In terms of biological role, this protein specifically catalyzes the removal of signal peptides from prolipoproteins. This chain is Lipoprotein signal peptidase, found in Mycolicibacterium smegmatis (strain ATCC 700084 / mc(2)155) (Mycobacterium smegmatis).